The chain runs to 267 residues: Lyso-ornithine lipid O-acyltransferase (267 aa).

A helical transmembrane segment spans residues 7 to 27; it reads IFLVVAAMVALSLSLIPFQYL.

This sequence belongs to the 1-acyl-sn-glycerol-3-phosphate acyltransferase family. OlsA subfamily.

The protein resides in the membrane. The catalysed reaction is a lyso-ornithine lipid + a fatty acyl-[ACP] = an N(2)-[(3R)-3-(acyloxy)acyl]-L-ornithine lipid + holo-[ACP]. It participates in lipid metabolism. In terms of biological role, catalyzes the second step in the formation of ornithine lipids, which are phosphorus-free membrane lipids. Uses acyl-acyl carrier protein (acyl-AcpP) as an acyl donor and converts lyso-ornithine lipid (LOL) into ornithine lipid (OL). The chain is Lyso-ornithine lipid O-acyltransferase from Brucella abortus (strain 2308).